The primary structure comprises 196 residues: Cilia- and flagella-associated protein 107 (196 aa).

2 mn regions span residues Thr47 to His62 and Ile97 to Tyr109.

In terms of assembly, microtubule inner protein component of sperm flagellar doublet microtubules.

The protein localises to the cytoplasm. It localises to the cytoskeleton. It is found in the cilium axoneme. The protein resides in the flagellum axoneme. In terms of biological role, microtubule inner protein (MIP) part of the dynein-decorated doublet microtubules (DMTs) in cilia axoneme, which is required for motile cilia beating. This Mus musculus (Mouse) protein is Cilia- and flagella-associated protein 107.